An 82-amino-acid polypeptide reads, in one-letter code: Protein transport protein SBH1 (82 aa).

Positions 1 to 36 (MSSPTPPGGQRTLQKRKQGSSQKVAASAPKKNTNSN) are disordered. The Cytoplasmic portion of the chain corresponds to 1–53 (MSSPTPPGGQRTLQKRKQGSSQKVAASAPKKNTNSNNSILKIYSDEATGLRVD). The span at 19–36 (GSSQKVAASAPKKNTNSN) shows a compositional bias: polar residues. Residues 54-74 (PLVVLFLAVGFIFSVVALHVI) traverse the membrane as a helical segment.

Belongs to the SEC61-beta family. Component of the heterotrimeric Sec61 complex, which is composed of SSH1, SBH1 and SSS1. Presumably three to four Sec61 heterotrimers assemble into an oligomeric ring with a central aqueous pore. In cotranslational ER import, the pore diameter varies from 9-15 A in a ribosome-free resting state to 40-60 A in a functional state when associated with the ribosome. The Sec61 complex is part of a channel-forming translocon complex whose composition seem to change dependent upon different functional states. During post-translational ER import the Sec61 complex associates with the Sec62/63 complex to form the Sec complex. SBH1 interacts OST2, OST4 and WBP1 components of the OT complex.

The protein localises to the endoplasmic reticulum membrane. Functionally, part of the Sec61 complex, which is the major component of a channel-forming translocon complex that mediates protein translocation across the endoplasmic reticulum (ER). The functional states of the translocon complex include co- and post-translational ER import, cotranslational membrane protein integration and retrograde transport of misfolded proteins out of the ER. In the cotranslational pathway, ribosomes synthesizing presecretory proteins are targeted to the translocon by the cytosolic signal recognition particle (SRP) and its ER-localized receptor. The association of the Sec61 complex with the ribosome is mediated by the 28S rRNA of the large ribosomal subunit. SRP-independent post-translational translocation requires the association of additional factors, such as the Sec62/63 complex and KAR2. This is Protein transport protein SBH1 (SBH1) from Saccharomyces cerevisiae (strain ATCC 204508 / S288c) (Baker's yeast).